We begin with the raw amino-acid sequence, 249 residues long: 5'-nucleotidase SurE (249 aa).

Residues D8, D9, S39, and N91 each coordinate a divalent metal cation.

It belongs to the SurE nucleotidase family. A divalent metal cation serves as cofactor.

Its subcellular location is the cytoplasm. It carries out the reaction a ribonucleoside 5'-phosphate + H2O = a ribonucleoside + phosphate. Functionally, nucleotidase that shows phosphatase activity on nucleoside 5'-monophosphates. The sequence is that of 5'-nucleotidase SurE from Ectopseudomonas mendocina (strain ymp) (Pseudomonas mendocina).